The following is a 331-amino-acid chain: Germ cell-specific gene 1-like protein (331 aa).

Residues 1–8 (MKTSRRGR) lie on the Cytoplasmic side of the membrane. Residues 9 to 29 (ALLAVALNLLALLFATTAFLT) form a helical membrane-spanning segment. At 30 to 132 (THWCQGTQRV…FIDLAPASEK (103 aa)) the chain is on the extracellular side. A helical transmembrane segment spans residues 133–153 (GVLWLSVVSEVLYILLLVVGF). Residues 154–173 (SLMCLELFHSSNVIDGLKLN) are Cytoplasmic-facing. Residues 174–194 (AFAAVFTVLSGLLGMVAHMMY) traverse the membrane as a helical segment. At 195–217 (TQVFQVTVSLGPEDWRPHSWDYG) the chain is on the extracellular side. The chain crosses the membrane as a helical span at residues 218 to 238 (WSFCLAWGSFTCCMAASVTTL). Topologically, residues 239-331 (NSYTKTVIEF…RQCWVLGHWV (93 aa)) are cytoplasmic.

The protein belongs to the GSG1 family. In terms of assembly, component of the inner core of AMPAR complex. AMPAR complex consists of an inner core made of 4 pore-forming GluA/GRIA proteins (GRIA1, GRIA2, GRIA3 and GRIA4) and 4 major auxiliary subunits arranged in a twofold symmetry. One of the two pairs of distinct binding sites is occupied either by CNIH2, CNIH3 or CACNG2, CACNG3. The other harbors CACNG2, CACNG3, CACNG4, CACNG8 or GSG1L. This inner core of AMPAR complex is complemented by outer core constituents binding directly to the GluA/GRIA proteins at sites distinct from the interaction sites of the inner core constituents. Outer core constituents include at least PRRT1, PRRT2, CKAMP44/SHISA9, FRRS1L and NRN1. The proteins of the inner and outer core serve as a platform for other, more peripherally associated AMPAR constituents. Alone or in combination, these auxiliary subunits control the gating and pharmacology of the AMPAR complex and profoundly impact their biogenesis and protein processing.

Its subcellular location is the cell membrane. It localises to the synapse. Functionally, as a component of the inner core of AMPAR complex, modifies AMPA receptor (AMPAR) gating. The sequence is that of Germ cell-specific gene 1-like protein (GSG1L) from Homo sapiens (Human).